The chain runs to 559 residues: Terpene synthase 1 (559 aa).

Residues Asp-312, Asp-316, Asp-456, and Glu-464 each contribute to the Mg(2+) site. The short motif at 312 to 316 (DDLYD) is the DDXXD motif element.

The protein belongs to the terpene synthase family. Tpsa subfamily. Mg(2+) is required as a cofactor. It depends on Mn(2+) as a cofactor. In terms of tissue distribution, mostly expressed in stems and, to a lower extent, in leaves, roots and fruits.

The catalysed reaction is (2E,6E)-farnesyl diphosphate = (-)-(E)-beta-caryophyllene + diphosphate. The enzyme catalyses (2E,6E)-farnesyl diphosphate = alpha-humulene + diphosphate. It functions in the pathway secondary metabolite biosynthesis; terpenoid biosynthesis. In terms of biological role, sesquiterpene synthase involved in the biosynthesis of volatile compounds that contribute to the characteristic flavors of black pepper. Mediates the conversion of (2E,6E)-farnesyl diphosphate (FPP) into beta-caryophyllene and, as a minor compound, into alpha-humulene. The chain is Terpene synthase 1 from Piper nigrum (Black pepper).